A 591-amino-acid chain; its full sequence is NADP-dependent malic enzyme (591 aa).

Y139 (proton donor) is an active-site residue. R192 contributes to the NAD(+) binding site. K210 functions as the Proton acceptor in the catalytic mechanism. 3 residues coordinate a divalent metal cation: E282, D283, and D306. NAD(+) is bound at residue D306. 335 to 351 (LFLGAGEAGTGIAELIA) contributes to the NADP(+) binding site. N447 is a binding site for NAD(+).

It belongs to the malic enzymes family. In terms of assembly, homotetramer. Mg(2+) is required as a cofactor. The cofactor is Mn(2+).

The protein resides in the cytoplasm. It catalyses the reaction (S)-malate + NADP(+) = pyruvate + CO2 + NADPH. It carries out the reaction oxaloacetate + H(+) = pyruvate + CO2. The protein is NADP-dependent malic enzyme of Vitis vinifera (Grape).